Reading from the N-terminus, the 90-residue chain is Bombyxin B-3 (90 aa).

The signal sequence occupies residues Met1 to Ser20. 3 cysteine pairs are disulfide-bonded: Cys30-Cys76, Cys42-Cys89, and Cys75-Cys80. A propeptide spans Ser49–Gly67 (c peptide like).

It belongs to the insulin family. As to quaternary structure, heterodimer of a B chain and an A chain linked by two disulfide bonds.

It is found in the secreted. Its function is as follows. Brain peptide responsible for activation of prothoracic glands to produce ecdysone in insects. The chain is Bombyxin B-3 (BBXB3) from Bombyx mori (Silk moth).